The following is a 543-amino-acid chain: T-complex protein 1 subunit eta (543 aa).

N-acetylmethionine is present on Met1. Gly41 serves as a coordination point for ADP. Gly41 lines the ATP pocket. Residue Lys67 is modified to N6-acetyllysine. Asp92 contributes to the Mg(2+) binding site. ADP-binding residues include Gly93, Thr94, Thr95, Ser96, Ser164, and Ser165. Residue Gly93 participates in ATP binding. Ser96 lines the ATP pocket. Lys250 and Lys320 each carry N6-acetyllysine. Residues Arg398 and Gly409 each coordinate ATP. Position 409 (Gly409) interacts with ADP. Residue Lys430 forms a Glycyl lysine isopeptide (Lys-Gly) (interchain with G-Cter in SUMO2) linkage. ADP is bound by residues Glu494 and Arg499. Arg499 is a binding site for ATP. Residue Arg535 is modified to Omega-N-methylarginine.

This sequence belongs to the TCP-1 chaperonin family. In terms of assembly, component of the chaperonin-containing T-complex (TRiC), a hexadecamer composed of two identical back-to-back stacked rings enclosing a protein folding chamber. Each ring is made up of eight different subunits: TCP1/CCT1, CCT2, CCT3, CCT4, CCT5, CCT6A/CCT6, CCT7, CCT8. Interacts with PACRG. Interacts with DLEC1.

Its subcellular location is the cytoplasm. The catalysed reaction is ATP + H2O = ADP + phosphate + H(+). Functionally, component of the chaperonin-containing T-complex (TRiC), a molecular chaperone complex that assists the folding of actin, tubulin and other proteins upon ATP hydrolysis. The TRiC complex mediates the folding of WRAP53/TCAB1, thereby regulating telomere maintenance. The polypeptide is T-complex protein 1 subunit eta (CCT7) (Pongo abelii (Sumatran orangutan)).